The sequence spans 264 residues: 3-methyl-2-oxobutanoate hydroxymethyltransferase (264 aa).

Mg(2+)-binding residues include aspartate 43 and aspartate 82. 3-methyl-2-oxobutanoate-binding positions include 43–44 (DS), aspartate 82, and lysine 111. Glutamate 113 contacts Mg(2+). Catalysis depends on glutamate 180, which acts as the Proton acceptor.

Belongs to the PanB family. As to quaternary structure, homodecamer; pentamer of dimers. The cofactor is Mg(2+).

The protein resides in the cytoplasm. It carries out the reaction 3-methyl-2-oxobutanoate + (6R)-5,10-methylene-5,6,7,8-tetrahydrofolate + H2O = 2-dehydropantoate + (6S)-5,6,7,8-tetrahydrofolate. Its pathway is cofactor biosynthesis; (R)-pantothenate biosynthesis; (R)-pantoate from 3-methyl-2-oxobutanoate: step 1/2. Functionally, catalyzes the reversible reaction in which hydroxymethyl group from 5,10-methylenetetrahydrofolate is transferred onto alpha-ketoisovalerate to form ketopantoate. The protein is 3-methyl-2-oxobutanoate hydroxymethyltransferase of Campylobacter fetus subsp. fetus (strain 82-40).